A 95-amino-acid polypeptide reads, in one-letter code: Small ribosomal subunit protein bS16 (95 aa).

It belongs to the bacterial ribosomal protein bS16 family.

The sequence is that of Small ribosomal subunit protein bS16 from Thermotoga maritima (strain ATCC 43589 / DSM 3109 / JCM 10099 / NBRC 100826 / MSB8).